The following is a 662-amino-acid chain: A-kinase anchor protein 10, mitochondrial (662 aa).

Residues 1-28 (MRGAGPSPRQSPRTLRPDPGPAMSFFRR) constitute a mitochondrion transit peptide. The interval 1–55 (MRGAGPSPRQSPRTLRPDPGPAMSFFRRKVKGKEQEKTSDVKSIKASISVHSPQK) is disordered. Over residues 32–43 (GKEQEKTSDVKS) the composition is skewed to basic and acidic residues. Ser-52 and Ser-189 each carry phosphoserine. 2 consecutive RGS domains span residues 125–369 (TLEQ…CKYQ) and 379–505 (YLAD…YKYL). The segment covering 261-280 (SMETQESSSTLTVASRNSPA) has biased composition (polar residues). The segment at 261–282 (SMETQESSSTLTVASRNSPASP) is disordered. Ser-281 is modified (phosphoserine). The interval 524–548 (LTAPGSVGPPDESHPGSSDSSASQS) is disordered. The PKA-RII subunit binding stretch occupies residues 634–647 (LAWKIAKMIVSDIM).

The protein localises to the mitochondrion. It is found in the membrane. The protein resides in the cytoplasm. Its function is as follows. Differentially targeted protein that binds to type I and II regulatory subunits of protein kinase A and anchors them to the mitochondria or the plasma membrane. Although the physiological relevance between PKA and AKAPS with mitochondria is not fully understood, one idea is that BAD, a proapoptotic member, is phosphorylated and inactivated by mitochondria-anchored PKA. It cannot be excluded too that it may facilitate PKA as well as G protein signal transduction, by acting as an adapter for assembling multiprotein complexes. With its RGS domain, it could lead to the interaction to G-alpha proteins, providing a link between the signaling machinery and the downstream kinase. The chain is A-kinase anchor protein 10, mitochondrial (AKAP10) from Homo sapiens (Human).